Consider the following 116-residue polypeptide: uncharacterized protein (116 aa).

A helical membrane pass occupies residues isoleucine 58–alanine 78.

Its subcellular location is the membrane. This is an uncharacterized protein from Rickettsia prowazekii (strain Madrid E).